The sequence spans 578 residues: CTP synthase 2 (578 aa).

The Glutamine amidotransferase type-1 domain maps to 305–564 (KIALVGKYTN…VAAASGTLGE (260 aa)). Active-site for GATase activity residues include Cys404, His537, and Glu539.

Belongs to the CTP synthase family. Homodimer. Oligomerizes to a tetramer in the presence of its substrates UTP and ATP. Requires Mg(2+) as cofactor.

The protein localises to the cytoplasm. It catalyses the reaction UTP + L-glutamine + ATP + H2O = CTP + L-glutamate + ADP + phosphate + 2 H(+). It functions in the pathway pyrimidine metabolism; CTP biosynthesis via de novo pathway; CTP from UDP: step 2/2. With respect to regulation, activated by GTP. Subject to allosteric product inhibition by CTP. Inhibited by p-chloromercuriphenylsulfonic acid, N-ethylmaleimide and cyclopentenylcytosine (CPEC). In terms of biological role, catalyzes the ATP-dependent amination of UTP to CTP with either L-glutamine or ammonia as the source of nitrogen. Plays an important role in the regulation of phospholipid synthesis. This is CTP synthase 2 (URA8) from Saccharomyces cerevisiae (strain ATCC 204508 / S288c) (Baker's yeast).